Consider the following 136-residue polypeptide: Small ribosomal subunit protein uS19 (136 aa).

The segment at 114–136 (RSRVSHGSAGVGATRSSKFVPLK) is disordered.

It belongs to the universal ribosomal protein uS19 family.

Its function is as follows. Protein S19 forms a complex with S13 that binds strongly to the 16S ribosomal RNA. In Methanosarcina acetivorans (strain ATCC 35395 / DSM 2834 / JCM 12185 / C2A), this protein is Small ribosomal subunit protein uS19.